The chain runs to 945 residues: Endo-1,4-beta-xylanase 1 (945 aa).

Over residues 16 to 41 the composition is skewed to basic and acidic residues; it reads NGDRNPDKKSRESMEVSRKDNEEPEK. A disordered region spans residues 16–50; the sequence is NGDRNPDKKSRESMEVSRKDNEEPEKQNNNNVASI. 3 consecutive CBM-cenC domains span residues 57 to 197, 227 to 362, and 397 to 541; these read NVIV…EGPS, IVVN…IEGP, and NILT…GPSS. Asn-86, Asn-239, Asn-305, Asn-349, Asn-417, Asn-453, and Asn-687 each carry an N-linked (GlcNAc...) asparagine glycan. Positions 589-884 constitute a GH10 domain; that stretch reads SGASVRVRQI…NEAGKRFLAV (296 aa). Glu-718 acts as the Proton donor in catalysis. The active-site Nucleophile is Glu-819.

Belongs to the glycosyl hydrolase 10 (cellulase F) family. In terms of tissue distribution, predominantly expressed in vascular bundles, but not in vessel cells. Mostly expressed in stems, at lower levels in roots, and weakly in inflorescences and seedlings.

It localises to the secreted. Its subcellular location is the cell wall. It catalyses the reaction Endohydrolysis of (1-&gt;4)-beta-D-xylosidic linkages in xylans.. It participates in glycan degradation; xylan degradation. Its function is as follows. Binds to and hydrolyzes insoluble and soluble xylan substrates. Exhibits xylanase activity. The sequence is that of Endo-1,4-beta-xylanase 1 from Arabidopsis thaliana (Mouse-ear cress).